Here is a 141-residue protein sequence, read N- to C-terminus: Large ribosomal subunit protein uL11 (141 aa).

Belongs to the universal ribosomal protein uL11 family. As to quaternary structure, part of the ribosomal stalk of the 50S ribosomal subunit. Interacts with L10 and the large rRNA to form the base of the stalk. L10 forms an elongated spine to which L12 dimers bind in a sequential fashion forming a multimeric L10(L12)X complex. One or more lysine residues are methylated.

In terms of biological role, forms part of the ribosomal stalk which helps the ribosome interact with GTP-bound translation factors. This chain is Large ribosomal subunit protein uL11, found in Streptococcus sanguinis (strain SK36).